A 311-amino-acid chain; its full sequence is Probable manganese-dependent inorganic pyrophosphatase (311 aa).

Mn(2+)-binding residues include His-9, Asp-13, Asp-15, Asp-77, His-99, and Asp-151.

The protein belongs to the PPase class C family. Mn(2+) is required as a cofactor.

Its subcellular location is the cytoplasm. It carries out the reaction diphosphate + H2O = 2 phosphate + H(+). In Streptococcus sanguinis (strain SK36), this protein is Probable manganese-dependent inorganic pyrophosphatase.